The sequence spans 393 residues: MSRIGTPLSPGATRVLLCGSGELGKEVVIELQRFGVEVIAVDRYADAPAMQVAHRSHVINMLDGAALRALIEQERPHYIVPEIEAIATATLVELESEGFTVIPSARAANLTMNREGIRRLAAEELGLPTSPYRFADSFEEYRAAAEALGFPCVVKPIMSSSGKGQSLLKGPEQLQAAWDYAQEGGRAGKGRVIVEGFIDFDYEITLLTVRHAGETTFCAPIGHRQEKGDYQESWQPQAMSTTAQAESERIARTVTEALGGRGLFGVELFVKGDQVWFSEVSPRPHDTGLVTLISQDLSEFALHARAILGLPIPAIRQFGPAASAVILVEGQSREVGFANLGQALAEPDTALRLFGKPEVAGQRRMGVALARDVSVETARQKATRAAQAVEVQL.

N(1)-(5-phospho-beta-D-ribosyl)glycinamide-binding positions include E22–L23 and E82. Residues R114, K155, S160–Q165, E195–I198, and E203 contribute to the ATP site. An ATP-grasp domain is found at R119–L308. The Mg(2+) site is built by E267 and E279. Residues D286, K356, and R363 to R364 contribute to the N(1)-(5-phospho-beta-D-ribosyl)glycinamide site.

It belongs to the PurK/PurT family. As to quaternary structure, homodimer.

The catalysed reaction is N(1)-(5-phospho-beta-D-ribosyl)glycinamide + formate + ATP = N(2)-formyl-N(1)-(5-phospho-beta-D-ribosyl)glycinamide + ADP + phosphate + H(+). It functions in the pathway purine metabolism; IMP biosynthesis via de novo pathway; N(2)-formyl-N(1)-(5-phospho-D-ribosyl)glycinamide from N(1)-(5-phospho-D-ribosyl)glycinamide (formate route): step 1/1. In terms of biological role, involved in the de novo purine biosynthesis. Catalyzes the transfer of formate to 5-phospho-ribosyl-glycinamide (GAR), producing 5-phospho-ribosyl-N-formylglycinamide (FGAR). Formate is provided by PurU via hydrolysis of 10-formyl-tetrahydrofolate. This is Formate-dependent phosphoribosylglycinamide formyltransferase from Azotobacter vinelandii (strain DJ / ATCC BAA-1303).